Here is a 181-residue protein sequence, read N- to C-terminus: ATP synthase subunit delta (181 aa).

Belongs to the ATPase delta chain family. As to quaternary structure, F-type ATPases have 2 components, F(1) - the catalytic core - and F(0) - the membrane proton channel. F(1) has five subunits: alpha(3), beta(3), gamma(1), delta(1), epsilon(1). F(0) has three main subunits: a(1), b(2) and c(10-14). The alpha and beta chains form an alternating ring which encloses part of the gamma chain. F(1) is attached to F(0) by a central stalk formed by the gamma and epsilon chains, while a peripheral stalk is formed by the delta and b chains.

It is found in the cell membrane. F(1)F(0) ATP synthase produces ATP from ADP in the presence of a proton or sodium gradient. F-type ATPases consist of two structural domains, F(1) containing the extramembraneous catalytic core and F(0) containing the membrane proton channel, linked together by a central stalk and a peripheral stalk. During catalysis, ATP synthesis in the catalytic domain of F(1) is coupled via a rotary mechanism of the central stalk subunits to proton translocation. Functionally, this protein is part of the stalk that links CF(0) to CF(1). It either transmits conformational changes from CF(0) to CF(1) or is implicated in proton conduction. The polypeptide is ATP synthase subunit delta (Oceanobacillus iheyensis (strain DSM 14371 / CIP 107618 / JCM 11309 / KCTC 3954 / HTE831)).